A 320-amino-acid chain; its full sequence is Transcription termination/antitermination protein NusG (320 aa).

Belongs to the NusG family.

Participates in transcription elongation, termination and antitermination. This is Transcription termination/antitermination protein NusG from Mycoplasma pneumoniae (strain ATCC 29342 / M129 / Subtype 1) (Mycoplasmoides pneumoniae).